We begin with the raw amino-acid sequence, 428 residues long: D-amino acid dehydrogenase (428 aa).

3 to 17 (VVILGSGVVGVASAY) contributes to the FAD binding site.

It belongs to the DadA oxidoreductase family. FAD is required as a cofactor.

It carries out the reaction a D-alpha-amino acid + A + H2O = a 2-oxocarboxylate + AH2 + NH4(+). It functions in the pathway amino-acid degradation; D-alanine degradation; NH(3) and pyruvate from D-alanine: step 1/1. Functionally, oxidative deamination of D-amino acids. The protein is D-amino acid dehydrogenase of Burkholderia mallei (strain NCTC 10247).